A 407-amino-acid polypeptide reads, in one-letter code: Proteasome-activating nucleotidase (407 aa).

Residues 22-67 (KEKTQIAELESKVLRLELKNKDVTRENVQIKKENEILKRELDKLRI) adopt a coiled-coil conformation. Residues 192–197 (GTGKTL) and histidine 331 each bind ATP. Positions 405–407 (MYG) are docks into pockets in the proteasome alpha-ring to cause gate opening.

Belongs to the AAA ATPase family. In terms of assembly, homohexamer. The hexameric complex has a two-ring architecture resembling a top hat that caps the 20S proteasome core at one or both ends. Upon ATP-binding, the C-terminus of PAN interacts with the alpha-rings of the proteasome core by binding to the intersubunit pockets.

The protein localises to the cytoplasm. In terms of biological role, ATPase which is responsible for recognizing, binding, unfolding and translocation of substrate proteins into the archaeal 20S proteasome core particle. Is essential for opening the gate of the 20S proteasome via an interaction with its C-terminus, thereby allowing substrate entry and access to the site of proteolysis. Thus, the C-termini of the proteasomal ATPase function like a 'key in a lock' to induce gate opening and therefore regulate proteolysis. Unfolding activity requires energy from ATP hydrolysis, whereas ATP binding alone promotes ATPase-20S proteasome association which triggers gate opening, and supports translocation of unfolded substrates. The chain is Proteasome-activating nucleotidase from Methanococcus maripaludis (strain C7 / ATCC BAA-1331).